We begin with the raw amino-acid sequence, 418 residues long: Centromere protein U (418 aa).

Residues 1–11 (MAPRGRRRPRP) show a composition bias toward basic residues. A disordered region spans residues 1-76 (MAPRGRRRPR…TYETFDPPLH (76 aa)). Positions 6 to 23 (RRRPRPHRSEGARRSKNT) match the Nuclear localization signal motif. Residues 12–42 (HRSEGARRSKNTLERTHSMKDKAGQKCKPID) show a composition bias toward basic and acidic residues. Phosphothreonine; by PLK1 is present on T78. The interval 88 to 227 (SKHCGLSLSS…KRKKSRSKAI (140 aa)) is disordered. At T98 the chain carries Phosphothreonine. Residue S108 is modified to Phosphoserine. T110 carries the post-translational modification Phosphothreonine. Residues S111, S116, and S120 each carry the phosphoserine modification. The span at 124–133 (SAKKPGRKLR) shows a compositional bias: basic residues. A phosphoserine mark is found at S136, S139, and S141. The segment covering 145–165 (SDTRRKVKSAEKISTQRHEVI) has biased composition (basic and acidic residues). Residues 180-193 (SVTSKKTGPLSAQP) are compositionally biased toward polar residues. K185 is covalently cross-linked (Glycyl lysine isopeptide (Lys-Gly) (interchain with G-Cter in SUMO2)). 2 positions are modified to phosphoserine: S190 and S194. The span at 208-224 (TQKKGKISHDKRKKSRS) shows a compositional bias: basic residues. The residue at position 232 (S232) is a Phosphoserine. Coiled-coil stretches lie at residues 297-356 (QMLT…NAAY) and 397-417 (LLGA…LLDQ). The Nuclear localization signal signature appears at 303–320 (KRKNAKMISDIEKKRQRM).

The protein belongs to the CENP-U/AME1 family. Component of the CENPA-NAC complex, at least composed of CENPA, CENPC, CENPH, CENPM, CENPN, CENPT and CENPU. The CENPA-NAC complex interacts with the CENPA-CAD complex, composed of CENPI, CENPK, CENPL, CENPO, CENPP, CENPQ, CENPR and CENPS. Interacts with MLF1. Interacts with PLK1. As to quaternary structure, (Microbial infection) Interacts with the N-terminal domain of Kaposi's sarcoma-associated herpesvirus latent nuclear antigen (LNA). Post-translationally, phosphorylated by PLK1 at Thr-78, creating a self-tethering site that specifically interacts with the polo-box domain of PLK1. As to expression, expressed at high levels in the testis, fetal liver, thymus, bone marrow and at lower levels in the lymph nodes, placenta, colon and spleen. Present in all cell lines examined, including B-cells, T-cells, epithelial cells and fibroblast cells. Expressed at high levels in glioblastoma cell lines.

Its subcellular location is the cytoplasm. The protein localises to the nucleus. It localises to the chromosome. The protein resides in the centromere. It is found in the kinetochore. Functionally, component of the CENPA-NAC (nucleosome-associated) complex, a complex that plays a central role in assembly of kinetochore proteins, mitotic progression and chromosome segregation. The CENPA-NAC complex recruits the CENPA-CAD (nucleosome distal) complex and may be involved in incorporation of newly synthesized CENPA into centromeres. Plays an important role in the correct PLK1 localization to the mitotic kinetochores. A scaffold protein responsible for the initial recruitment and maintenance of the kinetochore PLK1 population until its degradation. Involved in transcriptional repression. This Homo sapiens (Human) protein is Centromere protein U (CENPU).